The following is a 324-amino-acid chain: Olfactory receptor 8U3 (324 aa).

Residues Met-1–Ala-25 lie on the Extracellular side of the membrane. Residues Pro-26–Ile-46 form a helical membrane-spanning segment. Topologically, residues Thr-47–Arg-54 are cytoplasmic. The helical transmembrane segment at Leu-55 to Ser-75 threads the bilayer. Residues Ala-76–Thr-99 lie on the Extracellular side of the membrane. Cysteines 97 and 189 form a disulfide. A helical membrane pass occupies residues Gln-100–Tyr-120. The Cytoplasmic segment spans residues Asp-121–Arg-139. The helical transmembrane segment at Val-140 to Thr-160 threads the bilayer. The Extracellular segment spans residues Val-161–Glu-196. Residues Ile-197 to Ser-217 form a helical membrane-spanning segment. The Cytoplasmic portion of the chain corresponds to Tyr-218 to Ala-237. A helical membrane pass occupies residues Ile-238–Met-258. The Extracellular portion of the chain corresponds to Tyr-259–Asp-271. Asn-265 carries N-linked (GlcNAc...) asparagine glycosylation. The helical transmembrane segment at Lys-272 to Leu-292 threads the bilayer. The Cytoplasmic portion of the chain corresponds to Arg-293–Tyr-324.

This sequence belongs to the G-protein coupled receptor 1 family.

The protein localises to the cell membrane. Functionally, odorant receptor. The chain is Olfactory receptor 8U3 from Homo sapiens (Human).